Reading from the N-terminus, the 217-residue chain is Nitrile hydratase subunit beta (217 aa).

This sequence belongs to the nitrile hydratase subunit beta family. In terms of assembly, heterodimer of an alpha and a beta chain.

It carries out the reaction an aliphatic primary amide = an aliphatic nitrile + H2O. Functionally, NHase catalyzes the hydration of various nitrile compounds to the corresponding amides. This chain is Nitrile hydratase subunit beta (nthB), found in Pseudomonas putida (Arthrobacter siderocapsulatus).